Consider the following 386-residue polypeptide: L-arabinitol 4-dehydrogenase (386 aa).

Cys55, His80, Glu81, Cys110, Cys113, Cys116, Cys124, and Glu165 together coordinate Zn(2+). NAD(+)-binding positions include 192-193, Asp213, Arg218, Ile293, and 317-319; these read PI and QYR.

It belongs to the zinc-containing alcohol dehydrogenase family. In terms of assembly, homotetramer. It depends on Zn(2+) as a cofactor.

It catalyses the reaction L-arabinitol + NAD(+) = L-xylulose + NADH + H(+). The protein operates within carbohydrate degradation; L-arabinose degradation via L-arabinitol; D-xylulose 5-phosphate from L-arabinose (fungal route): step 2/5. Functionally, catalyzes the NAD-dependent oxidation of L-arabinitol to L-xylulose in the fungal L-arabinose catabolic pathway. L-arabinose catabolism is important for using plant material as a carbon source. Not active with NADP as cosubstrate. The chain is L-arabinitol 4-dehydrogenase (ladA) from Aspergillus niger (strain ATCC MYA-4892 / CBS 513.88 / FGSC A1513).